The following is a 400-amino-acid chain: tRNA (guanine-N(7)-)-methyltransferase (400 aa).

Positions 124, 149, and 176 each coordinate S-adenosyl-L-methionine. Asp232 is a substrate binding site.

It belongs to the class I-like SAM-binding methyltransferase superfamily. TrmB family.

It carries out the reaction guanosine(46) in tRNA + S-adenosyl-L-methionine = N(7)-methylguanosine(46) in tRNA + S-adenosyl-L-homocysteine. The protein operates within tRNA modification; N(7)-methylguanine-tRNA biosynthesis. Its function is as follows. Catalyzes the formation of N(7)-methylguanine at position 46 (m7G46) in tRNA. In Helicobacter pylori (strain J99 / ATCC 700824) (Campylobacter pylori J99), this protein is tRNA (guanine-N(7)-)-methyltransferase.